The primary structure comprises 147 residues: MLSTKIDAENAENAAEIEMQFAVKAVEQAQIYWSLLEMRKGSELKLTKYDDEIFEDLINTFPEFKDPKTASFVNEDEMKSAKGKAAWRPFLMRYEKKVDDYNFGTLLRIKNTDEYEQETTIFVPRMQFLAYEIARNRYGLNDWIKKD.

It belongs to the PBDC1 family.

The protein localises to the cytoplasm. Its subcellular location is the nucleus. In Schizosaccharomyces pombe (strain 972 / ATCC 24843) (Fission yeast), this protein is Protein PBDC1 homolog.